Consider the following 130-residue polypeptide: Small ribosomal subunit protein uS11 (130 aa).

It belongs to the universal ribosomal protein uS11 family. In terms of assembly, part of the 30S ribosomal subunit. Interacts with proteins S7 and S18. Binds to IF-3.

In terms of biological role, located on the platform of the 30S subunit, it bridges several disparate RNA helices of the 16S rRNA. Forms part of the Shine-Dalgarno cleft in the 70S ribosome. This is Small ribosomal subunit protein uS11 from Syntrophomonas wolfei subsp. wolfei (strain DSM 2245B / Goettingen).